Here is a 277-residue protein sequence, read N- to C-terminus: Ubiquinone biosynthesis protein COQ4, mitochondrial (277 aa).

The transit peptide at Met-1–Arg-14 directs the protein to the mitochondrion. Zn(2+)-binding residues include His-157, Asp-158, His-161, and Glu-173.

Belongs to the COQ4 family. Component of a multi-subunit COQ enzyme complex, composed of at least COQ3, COQ4, COQ5, COQ6, COQ7 and COQ9. Zn(2+) is required as a cofactor.

The protein resides in the mitochondrion inner membrane. It catalyses the reaction a 4-hydroxy-3-methoxy-5-(all-trans-polyprenyl)benzoate + H(+) = a 2-methoxy-6-(all-trans-polyprenyl)phenol + CO2. Its pathway is cofactor biosynthesis; ubiquinone biosynthesis. In terms of biological role, lyase that catalyzes the C1-decarboxylation of 4-hydroxy-3-methoxy-5-(all-trans-polyprenyl)benzoic acid into 2-methoxy-6-(all-trans-polyprenyl)phenol during ubiquinone biosynthesis. In Ajellomyces capsulatus (strain G186AR / H82 / ATCC MYA-2454 / RMSCC 2432) (Darling's disease fungus), this protein is Ubiquinone biosynthesis protein COQ4, mitochondrial.